The following is a 491-amino-acid chain: Glutamate--tRNA ligase (491 aa).

The 'HIGH' region signature appears at 13–23 (PSPTGFLHIGN). Zn(2+) is bound by residues C110, C112, C137, and H139. The short motif at 254 to 258 (KLSKR) is the 'KMSKS' region element. Residue K257 coordinates ATP.

The protein belongs to the class-I aminoacyl-tRNA synthetase family. Glutamate--tRNA ligase type 1 subfamily. As to quaternary structure, monomer. The cofactor is Zn(2+).

It is found in the cytoplasm. The catalysed reaction is tRNA(Glu) + L-glutamate + ATP = L-glutamyl-tRNA(Glu) + AMP + diphosphate. Catalyzes the attachment of glutamate to tRNA(Glu) in a two-step reaction: glutamate is first activated by ATP to form Glu-AMP and then transferred to the acceptor end of tRNA(Glu). This is Glutamate--tRNA ligase from Listeria monocytogenes serovar 1/2a (strain ATCC BAA-679 / EGD-e).